We begin with the raw amino-acid sequence, 158 residues long: MTITDLVLILFIAALLAFAIYDQFIMPRRNGPTLLAIPLLRRGRIDSVIFVGLIVILIYNNVTNHGALITTWLLSALALMGFYIFWIRIPKIIFKQKGFFFANVWIEYSRIKAMNLSEDGVLVMQLEQRRLLIRVRNIDDLEKIYKLLVSGNAANLLI.

The next 3 membrane-spanning stretches (helical) occupy residues 6 to 26 (LVLI…QFIM), 45 to 65 (IDSV…VTNH), and 67 to 87 (ALIT…IFWI).

It belongs to the UPF0266 family.

It is found in the cell inner membrane. The polypeptide is UPF0266 membrane protein YobD (Shigella boydii serotype 4 (strain Sb227)).